We begin with the raw amino-acid sequence, 323 residues long: Acetyl esterase (323 aa).

Positions 91–93 match the Involved in the stabilization of the negatively charged intermediate by the formation of the oxyanion hole motif; the sequence is HGG. Active-site residues include S165, D262, and H292.

This sequence belongs to the 'GDXG' lipolytic enzyme family. Homodimer. Interacts with MalT and MelA.

The protein localises to the cytoplasm. In terms of biological role, displays esterase activity towards short chain fatty esters (acyl chain length of up to 8 carbons). Able to hydrolyze triacetylglycerol (triacetin) and tributyrylglycerol (tributyrin), but not trioleylglycerol (triolein) or cholesterol oleate. Negatively regulates MalT activity by antagonizing maltotriose binding. Inhibits MelA galactosidase activity. This is Acetyl esterase from Salmonella typhi.